We begin with the raw amino-acid sequence, 153 residues long: Transcriptional repressor NrdR (153 aa).

Residues 3 to 34 fold into a zinc finger; sequence CPFCNNISTNVKDSRSIEDDMLIRRRRVCPVC. The ATP-cone domain occupies 49–139; it reads LMVIKKNGGL…VYMNFKNIND (91 aa).

Belongs to the NrdR family. Zn(2+) is required as a cofactor.

Functionally, negatively regulates transcription of bacterial ribonucleotide reductase nrd genes and operons by binding to NrdR-boxes. In Ehrlichia ruminantium (strain Gardel), this protein is Transcriptional repressor NrdR.